We begin with the raw amino-acid sequence, 139 residues long: Large ribosomal subunit protein bL17 (139 aa).

This sequence belongs to the bacterial ribosomal protein bL17 family. In terms of assembly, part of the 50S ribosomal subunit. Contacts protein L32.

This Cereibacter sphaeroides (strain ATCC 17029 / ATH 2.4.9) (Rhodobacter sphaeroides) protein is Large ribosomal subunit protein bL17.